The sequence spans 500 residues: Lysine--tRNA ligase (500 aa).

Mg(2+) is bound by residues E410 and E417.

It belongs to the class-II aminoacyl-tRNA synthetase family. In terms of assembly, homodimer. The cofactor is Mg(2+).

It is found in the cytoplasm. The catalysed reaction is tRNA(Lys) + L-lysine + ATP = L-lysyl-tRNA(Lys) + AMP + diphosphate. The sequence is that of Lysine--tRNA ligase from Pseudomonas savastanoi pv. phaseolicola (strain 1448A / Race 6) (Pseudomonas syringae pv. phaseolicola (strain 1448A / Race 6)).